The following is a 507-amino-acid chain: Glutamate--tRNA ligase (507 aa).

Residues 14–24 (PSPTGPLHIGG) carry the 'HIGH' region motif. Residues 262–266 (KLSKR) carry the 'KMSKS' region motif. Residue lysine 265 participates in ATP binding.

This sequence belongs to the class-I aminoacyl-tRNA synthetase family. Glutamate--tRNA ligase type 1 subfamily. As to quaternary structure, monomer.

It is found in the cytoplasm. The catalysed reaction is tRNA(Glu) + L-glutamate + ATP = L-glutamyl-tRNA(Glu) + AMP + diphosphate. Functionally, catalyzes the attachment of glutamate to tRNA(Glu) in a two-step reaction: glutamate is first activated by ATP to form Glu-AMP and then transferred to the acceptor end of tRNA(Glu). The sequence is that of Glutamate--tRNA ligase from Porphyromonas gingivalis (strain ATCC 33277 / DSM 20709 / CIP 103683 / JCM 12257 / NCTC 11834 / 2561).